The primary structure comprises 15639 residues: FR901469 synthetase (15639 aa).

One can recognise a Carrier 1 domain in the interval 5–81 (HTSDGLRKLL…DLVDKIIEQQ (77 aa)). S42 is modified (O-(pantetheine 4'-phosphoryl)serine). The segment covering 82-94 (LEEEEEDDDSLDN) has biased composition (acidic residues). Residues 82–105 (LEEEEEDDDSLDNESERDHSQKDL) form a disordered region. The tract at residues 140-553 (PCLSMQEGCL…RDFLPLTEDD (414 aa)) is condensation 1. The tract at residues 579 to 971 (TISKQPDAVA…LGRRDTQVKI (393 aa)) is adenylation 1. The Carrier 2 domain occupies 1108-1184 (TPATAIEKEL…ELALVARSTT (77 aa)). O-(pantetheine 4'-phosphoryl)serine is present on S1145. Residues 1219 to 1626 (RSSNRFNQSV…TITHLVKRLA (408 aa)) form an epimerase 1 region. Residues 1667-2097 (EDVLPCTPIQ…LGNLSLLTNN (431 aa)) are condensation 2. Positions 2122 to 2518 (QEAAKEYTNA…GRRDNQIKIR (397 aa)) are adenylation 2. Residues 2654–2730 (VPATALEKQL…ELALKAKSTT (77 aa)) form the Carrier 3 domain. S2691 is modified (O-(pantetheine 4'-phosphoryl)serine). Residues 2761–3176 (VSAGEHRYNQ…TELLHRLEQM (416 aa)) are epimerase 2. The tract at residues 3215-3640 (QDIYPCSPTQ…DDLIMMSPED (426 aa)) is condensation 3. Residues 3669–4059 (TQPHAPAVAA…MGRIDSQIKI (391 aa)) form an adenylation 3 region. One can recognise a Carrier 4 domain in the interval 4193 to 4269 (PPSNDAERMV…QLAAIVTQRG (77 aa)). Position 4230 is an O-(pantetheine 4'-phosphoryl)serine (S4230). Residues 4316 to 4714 (EDVYPCTPLQ…ILAHGTGLEE (399 aa)) are condensation 4. An adenylation 4 region spans residues 4756 to 5149 (TEAASTRPDA…GRLDTQAKLR (394 aa)). The Carrier 5 domain maps to 5284-5360 (EPATIMERQL…DLASHIDHHT (77 aa)). S5321 is subject to O-(pantetheine 4'-phosphoryl)serine. A condensation 5 region spans residues 5402–5802 (EDIYPCTPLQ…TVFAQLCDSS (401 aa)). Positions 5847 to 6238 (KYPNEPAVHA…LGRRDSQMKV (392 aa)) are adenylation 5. Positions 6375–6451 (QPSTTAEIKL…DMAKIVEEHV (77 aa)) constitute a Carrier 6 domain. S6412 carries the O-(pantetheine 4'-phosphoryl)serine modification. The condensation 6 stretch occupies residues 6494-6889 (EDVYPATPLQ…RFAKVYQQLS (396 aa)). An adenylation 6 region spans residues 6952–7335 (WDGSMTYAEL…GRRDTQIKIR (384 aa)). A Carrier 7 domain is found at 7473 to 7546 (TAMEEQLRTV…QLALLASTDE (74 aa)). S7507 carries the O-(pantetheine 4'-phosphoryl)serine modification. Positions 7580–7992 (MGENRYNQSV…SKTLEELTTQ (413 aa)) are epimerase 3. A condensation 7 region spans residues 8034–8459 (EDVFPASPMQ…QRMRNISLAS (426 aa)). The adenylation 7 stretch occupies residues 8486 to 8882 (QKSVHARPDA…GRRDTQVKIR (397 aa)). Positions 9015-9091 (QPATDAERQL…DLAKTIQDSE (77 aa)) constitute a Carrier 8 domain. S9052 is subject to O-(pantetheine 4'-phosphoryl)serine. Residues 9136–9535 (EDVYPCTPLQ…FAAIFRQLCD (400 aa)) form a condensation 8 region. The adenylation 8 stretch occupies residues 9583–9974 (KNPHAIAVNA…GRRDNQMKIR (392 aa)). In terms of domain architecture, Carrier 9 spans 10110-10186 (EPATPMEMQL…GLAALIQKQI (77 aa)). Residue S10147 is modified to O-(pantetheine 4'-phosphoryl)serine. The interval 10186–10208 (IDEEEEYDDSEEEEEDDEEEVRE) is disordered. Residues 10187 to 10206 (DEEEEYDDSEEEEEDDEEEV) show a composition bias toward acidic residues. Positions 10240 to 10662 (VEDVYPCTPL…VLSETDKTKI (423 aa)) are condensation 9. The interval 10683-11082 (KQAIERPNAP…GRRDTQIKIR (400 aa)) is adenylation 9. The 77-residue stretch at 11217–11293 (EPATGMERHL…DLARETESQG (77 aa)) folds into the Carrier 10 domain. Residue S11254 is modified to O-(pantetheine 4'-phosphoryl)serine. A condensation 10 region spans residues 11329 to 11725 (EDVYPCTPLQ…ETIFQQLSSV (397 aa)). The segment at 11770 to 12165 (FKRTADKQPE…GRRDTQIKVR (396 aa)) is adenylation 10. Residues 12298–12374 (EPSTEMERRI…DLAAAVQGRI (77 aa)) form the Carrier 11 domain. The residue at position 12335 (S12335) is an O-(pantetheine 4'-phosphoryl)serine. Positions 12418-12830 (EDVYPATPLQ…IQDIEMVSEQ (413 aa)) are condensation 11. The segment at 12861-13249 (SRADEIAICA…GRRDTQIKIR (389 aa)) is adenylation 11. A Carrier 12 domain is found at 13383–13459 (MPGTVQEEQL…QLGQKVKEAV (77 aa)). Position 13420 is an O-(pantetheine 4'-phosphoryl)serine (S13420). An epimerase 4 region spans residues 13476 to 13901 (APIQQMFFEQ…LKDMTSTLLQ (426 aa)). A condensation 12 region spans residues 13940-14369 (EDILPCSPIQ…SIVGEHDLQQ (430 aa)). The adenylation 12 stretch occupies residues 14390 to 14789 (RDAAHRTPDA…GRGDGQIKIR (400 aa)). The 77-residue stretch at 14916–14992 (LPASADEGAL…DMASVASAAR (77 aa)) folds into the Carrier 13 domain. O-(pantetheine 4'-phosphoryl)serine is present on S14953. A condensation 13 region spans residues 15062–15433 (QHAVDLAALK…DIMVRLASQQ (372 aa)). Disordered stretches follow at residues 15434–15511 (EGTV…ENRQ) and 15617–15639 (VQTNGHAGKGVTNGVNGGSKGHI). The span at 15455 to 15472 (NGTNGSNGDGTDAANGIG) shows a compositional bias: low complexity. The segment covering 15482 to 15494 (AVEKSSGDAEVEK) has biased composition (basic and acidic residues). Residues 15495 to 15511 (VSTNGHADNNTSAENRQ) show a composition bias toward polar residues.

It belongs to the NRP synthetase family.

It participates in antifungal biosynthesis. In terms of biological role, nonribosomal peptide synthetase; part of the gene cluster that mediates the biosynthesis of the antifungal antibiotic FR901469, an inhibitor of beta-1,3-glucansynthase, exerting antifungal activity against the pathogenes Candida albicans and Aspergillus fumigatus. FR901469 is a cyclic depsipeptide containing 12 amino acid residues and a fatty acid chain. The NRPS frbI contains 12 modules responsible for the formation of the depsipeptide backbone which is denoted as Acyl-Thr-Ala-Tyr-Val-4OHPro-Thr-Thr-3OHPro-threo3OHGln-Gly-Thr-Orn-OH (C71H116N14O23). The PKS frbB is probably involved in the production of the hydrocarbon chain, and the acyl-CoA ligase frbC might be involved in the transport of the chain to the peptide ptoduct of frbI. Because FR901469 contains 3 hydroxylated amino acid residues, the 3 oxygenases frbA, frbH, and frbJ might be participating in amino acid hydroxylation. As no thioesterase domains were detected in frbI or frbB, the thioesterases frbD and frbE may instead release and cyclize the products of the NRPS and PKS, respectively. This Dothideomycetidae sp. (strain 11243) (Fungal sp. (strain No.11243)) protein is FR901469 synthetase.